A 133-amino-acid chain; its full sequence is uncharacterized protein (133 aa).

This is an uncharacterized protein from Rickettsia conorii (strain ATCC VR-613 / Malish 7).